The primary structure comprises 293 residues: Polyamine aminopropyltransferase (293 aa).

Residues 10-244 enclose the PABS domain; sequence HIWFTEYHNN…GFWSFTLASK (235 aa). Residue Gln39 coordinates S-methyl-5'-thioadenosine. Spermidine contacts are provided by His70 and Asp94. S-methyl-5'-thioadenosine is bound by residues Glu114 and 145–146; that span reads DG. The Proton acceptor role is filled by Asp163. 163-166 lines the spermidine pocket; it reads DCPD. Pro170 serves as a coordination point for S-methyl-5'-thioadenosine.

This sequence belongs to the spermidine/spermine synthase family. Homodimer or homotetramer.

Its subcellular location is the cytoplasm. It carries out the reaction S-adenosyl 3-(methylsulfanyl)propylamine + putrescine = S-methyl-5'-thioadenosine + spermidine + H(+). It functions in the pathway amine and polyamine biosynthesis; spermidine biosynthesis; spermidine from putrescine: step 1/1. Catalyzes the irreversible transfer of a propylamine group from the amino donor S-adenosylmethioninamine (decarboxy-AdoMet) to putrescine (1,4-diaminobutane) to yield spermidine. This Methanocaldococcus jannaschii (strain ATCC 43067 / DSM 2661 / JAL-1 / JCM 10045 / NBRC 100440) (Methanococcus jannaschii) protein is Polyamine aminopropyltransferase.